Here is a 192-residue protein sequence, read N- to C-terminus: Cysteine and glycine-rich protein 1 (192 aa).

Positions 10-61 (CGVCQKAVYFAEEVQCEGSSFHKSCFLCMVCKKNLDSTTVAVHGDEIYCKSC) constitute an LIM zinc-binding 1 domain. The Nuclear localization signal motif lies at 64 to 69 (KKYGPK). The 52-residue stretch at 118–169 (CPRCGQAVYAAEKVIGAGKSWHKSCFRCAKCGKSLESTTLADKDGEIYCKGC) folds into the LIM zinc-binding 2 domain.

Probable monomer. Interacts with ZYX. In terms of tissue distribution, most prominent in tissues that are enriched in smooth muscle cells, such as gizzard, stomach, and intestine. Lower level in the heart, no expression in liver, skeletal muscle, or brain.

The protein resides in the nucleus. It is found in the cytoplasm. Its subcellular location is the cytoskeleton. Functionally, heat stable protein, that interacts with zyxin/ZYX. May be a component of a signal transduction pathway that mediates adhesion-stimulated changes in gene expression. This Gallus gallus (Chicken) protein is Cysteine and glycine-rich protein 1 (CSRP1).